The sequence spans 160 residues: Putative pre-16S rRNA nuclease (160 aa).

This sequence belongs to the YqgF nuclease family.

It is found in the cytoplasm. In terms of biological role, could be a nuclease involved in processing of the 5'-end of pre-16S rRNA. This is Putative pre-16S rRNA nuclease from Cereibacter sphaeroides (strain KD131 / KCTC 12085) (Rhodobacter sphaeroides).